Here is a 104-residue protein sequence, read N- to C-terminus: Thioredoxin (104 aa).

Positions 2-104 (AIVKVTDSDF…NLAEVLDKHL (103 aa)) constitute a Thioredoxin domain. A disulfide bond links C29 and C32.

It belongs to the thioredoxin family.

In terms of biological role, component of the thioredoxin-thioredoxin reductase system. Participates in various redox reactions through the reversible oxidation of its active center dithiol to a disulfide and catalyzes dithiol-disulfide exchange reactions. In Staphylococcus epidermidis (strain ATCC 35984 / DSM 28319 / BCRC 17069 / CCUG 31568 / BM 3577 / RP62A), this protein is Thioredoxin (trxA).